The sequence spans 844 residues: Probable serine/threonine-protein kinase DDB_G0267566 (844 aa).

ANK repeat units lie at residues 335–367 and 371–400; these read KGDT…NANI and KHKV…KPFL. Positions 508 to 773 constitute a Protein kinase domain; the sequence is SELGKLIGKG…FEVFQKLKKV (266 aa). Residues 514-522 and lysine 539 each bind ATP; that span reads IGKGANGKV. Residue aspartate 634 is the Proton acceptor of the active site.

Belongs to the protein kinase superfamily. Ser/Thr protein kinase family.

The enzyme catalyses L-seryl-[protein] + ATP = O-phospho-L-seryl-[protein] + ADP + H(+). It catalyses the reaction L-threonyl-[protein] + ATP = O-phospho-L-threonyl-[protein] + ADP + H(+). The sequence is that of Probable serine/threonine-protein kinase DDB_G0267566 from Dictyostelium discoideum (Social amoeba).